A 457-amino-acid polypeptide reads, in one-letter code: MRIHILGICGTFMGGLAMLARQLGHEVTGSDANVYPPMSTLLEKQGIELIQGYDASQLEPQPDLVIIGNAMTRGNPCVEAVLEKNIPYMSGPQWLHDFVLRDRWVLAVAGTHGKTTTAGMATWILEQCGYKPGFVIGGVPGNFEVSAHLGESDFFVIEADEYDCAFFDKRSKFVHYCPRTLILNNLEFDHADIFDDLKAIQKQFHHLVRIVPGQGRIIWPENDINLKQTMAMGCWSEQELVGEQGHWQAKKLTTDASEWEVLLDGEKVGEVKWSLVGEHNMHNGLMAIAAARHVGVAPADAANALGSFINARRRLELRGEANGVTVYDDFAHHPTAILATLAALRGKVGGTARIIAVLEPRSNTMKMGICKDDLAPSLGRADEVFLLQPAHIPWQVAEVAEACVQPAHWSGDVDTLADMVVKTAQPGDHILVMSNGGFGGIHQKLLDGLAKKAEAAQ.

ATP is bound at residue 110–116 (GTHGKTT).

This sequence belongs to the MurCDEF family. Mpl subfamily. Mg(2+) is required as a cofactor.

The protein resides in the secreted. It carries out the reaction UDP-N-acetyl-alpha-D-muramate + L-alanyl-gamma-D-glutamyl-meso-2,6-diaminopimelate + ATP = UDP-N-acetyl-alpha-D-muramoyl-L-alanyl-gamma-D-glutamyl-meso-2,6-diaminopimelate + ADP + phosphate + H(+). It participates in cell wall biogenesis; peptidoglycan recycling. In terms of biological role, reutilizes the intact tripeptide L-alanyl-gamma-D-glutamyl-meso-diaminopimelate by linking it to UDP-N-acetylmuramate. The enzyme can also use the tetrapeptide L-alanyl-gamma-D-glutamyl-meso-2,6-diaminoheptanedioyl-D-alanine or the pentapeptide L-alanyl-gamma-D-glutamyl-meso-2,6-diaminoheptandioyl-D-alanyl-D-alanine in vivo and in vitro. The protein is UDP-N-acetylmuramate--L-alanyl-gamma-D-glutamyl-meso-2,6-diaminoheptandioate ligase of Escherichia coli (strain K12).